The chain runs to 375 residues: Serpin B5 (375 aa).

3 N-linked (GlcNAc...) asparagine glycosylation sites follow: asparagine 133, asparagine 298, and asparagine 361.

It belongs to the serpin family. Ov-serpin subfamily. In terms of assembly, interacts with IRF6.

The protein resides in the secreted. The protein localises to the extracellular space. Tumor suppressor. It blocks the growth, invasion, and metastatic properties of mammary tumors. As it does not undergo the S (stressed) to R (relaxed) conformational transition characteristic of active serpins, it exhibits no serine protease inhibitory activity. The polypeptide is Serpin B5 (Serpinb5) (Mus musculus (Mouse)).